The chain runs to 269 residues: Type II iodothyronine deiodinase (269 aa).

The Lumenal segment spans residues 1–7; that stretch reads MGLLSVD. The chain crosses the membrane as a helical; Signal-anchor for type III membrane protein span at residues 8–28; it reads LLITLQILPWFFSNCLFLALY. Over 29–269 the chain is Cytoplasmic; that stretch reads DSVVLLKHVI…RUVPTCELIM (241 aa). Sec-128 is a catalytic residue. 2 non-standard amino acids (selenocysteine) are found at residues Sec-128 and Sec-261.

The protein belongs to the iodothyronine deiodinase family. In terms of assembly, predominantly monomer. Can form homodimers but homodimerization is not essential for enzyme activity.

It is found in the endoplasmic reticulum membrane. It carries out the reaction 3,3',5-triiodo-L-thyronine + iodide + A + H(+) = L-thyroxine + AH2. The catalysed reaction is 3,3'-diiodo-L-thyronine + iodide + A + H(+) = 3,3',5'-triiodo-L-thyronine + AH2. It catalyses the reaction 3'-iodo-L-thyronine + iodide + A + H(+) = 3',5'-diiodo-L-thyronine + AH2. The enzyme catalyses 3,3'-diiodothyronamine + iodide + A + H(+) = 3,3',5'-triiodothyronamine + AH2. It carries out the reaction 3'-iodothyronamine + iodide + A + H(+) = 3',5'-diiodothyronamine + AH2. In terms of biological role, plays a crucial role in the metabolism of thyroid hormones (TH) and has specific roles in TH activation and inactivation by deiodination. Catalyzes the deiodination of L-thyroxine (T4) to 3,5,3'-triiodothyronine (T3), 3,3',5'-triiodothyronine (rT3) to 3,3'-diiodothyronine (3,3'-T2) and 3',5'-diiodothyronine (3',5'-T2) to 3'-monoiodothyronine (3'-T1) via outer-ring deiodination (ORD). Catalyzes the phenolic ring deiodinations of 3,3',5'-triiodothyronamine and 3',5'- diiodothyronamine. In Neoceratodus forsteri (Australian lungfish), this protein is Type II iodothyronine deiodinase (dio2).